The sequence spans 291 residues: Undecaprenyl-diphosphatase (291 aa).

A run of 8 helical transmembrane segments spans residues 1-21 (MFII…LTEF), 48-68 (SAFT…AWVF), 102-122 (LHVL…DDFI), 126-146 (LFSV…MIIA), 162-182 (INYF…WPGF), 203-223 (SDFT…LSLL), 231-251 (IADI…GLIA), and 267-287 (FAIY…GFGI).

Belongs to the UppP family.

It localises to the cell membrane. The enzyme catalyses di-trans,octa-cis-undecaprenyl diphosphate + H2O = di-trans,octa-cis-undecaprenyl phosphate + phosphate + H(+). Its function is as follows. Catalyzes the dephosphorylation of undecaprenyl diphosphate (UPP). Confers resistance to bacitracin. In Staphylococcus aureus (strain bovine RF122 / ET3-1), this protein is Undecaprenyl-diphosphatase.